The primary structure comprises 1020 residues: DNA-directed RNA polymerase 2, chloroplastic/mitochondrial (1020 aa).

Positions 314–336 (KKQKAEKDKQKEDGEHVTQEQEK) are disordered. Residues D721, K796, and D953 contribute to the active site.

The protein belongs to the phage and mitochondrial RNA polymerase family. The highest levels of expression are detected in the mature leaves. The level of expression is lowest in the cotyledons.

It is found in the plastid. It localises to the chloroplast. Its subcellular location is the mitochondrion. It carries out the reaction RNA(n) + a ribonucleoside 5'-triphosphate = RNA(n+1) + diphosphate. DNA-dependent RNA polymerase catalyzes the transcription of DNA into RNA using the four ribonucleoside triphosphates as substrates. The protein is DNA-directed RNA polymerase 2, chloroplastic/mitochondrial (RPOT2) of Nicotiana sylvestris (Wood tobacco).